The following is a 684-amino-acid chain: Early phosphoprotein p84 (684 aa).

Disordered regions lie at residues L166–P301, S317–A336, V357–T393, R407–F452, and S569–F657. The segment covering E180–E191 has biased composition (basic and acidic residues). Positions A201–G220 are enriched in gly residues. Basic and acidic residues-rich tracts occupy residues R232–P245 and R258–H272. Positions K261–K264 match the Nuclear localization signal motif. A compositionally biased stretch (gly residues) spans G285–G296. Over residues N326–N335 the composition is skewed to basic residues. A compositionally biased stretch (low complexity) spans S359 to S377. A compositionally biased stretch (polar residues) spans S425–A442. Over residues P578–G587 the composition is skewed to pro residues. Residues R598–R608 show a composition bias toward gly residues. Low complexity predominate over residues R612–S622.

Belongs to the herpesviridae U79/UL112 family. As to quaternary structure, isoforms 1, 2, 3 and 4 interacts with themselves and with each other via their shared N-terminal regions; these interactions are important to both their intranuclear targeting and the recruitment of UL44 to subnuclear sites for viral replication.

The protein localises to the host nucleus. It localises to the virion. Needed for efficient replication. Recruits the DNA polymerase processivity factor to pre-replication foci. The protein is Early phosphoprotein p84 (UL112/UL113) of Homo sapiens (Human).